The following is a 206-amino-acid chain: Isochorismatase domain-containing protein 2A (206 aa).

Position 26 is an N6-succinyllysine (lysine 26). N6-acetyllysine; alternate occurs at positions 93 and 178. Residues lysine 93 and lysine 178 each carry the N6-succinyllysine; alternate modification. Lysine 182 and lysine 185 each carry N6-acetyllysine.

This sequence belongs to the isochorismatase family. Interacts with CDKN2A. Ubiquitous. Expressed predominantly in uterus, stomach and urinary tract.

Its subcellular location is the cytoplasm. It is found in the nucleus. This is Isochorismatase domain-containing protein 2A from Mus musculus (Mouse).